A 240-amino-acid chain; its full sequence is Probable transcriptional regulatory protein Adeh_2184 (240 aa).

The protein belongs to the TACO1 family.

Its subcellular location is the cytoplasm. The chain is Probable transcriptional regulatory protein Adeh_2184 from Anaeromyxobacter dehalogenans (strain 2CP-C).